The following is a 111-amino-acid chain: Probable 4-amino-4-deoxy-L-arabinose-phosphoundecaprenol flippase subunit ArnE (111 aa).

The Cytoplasmic segment spans residues 1-35 (MIWLTLVFASLLSVAGQLCQKQATCFVAISKRRKH). A helical membrane pass occupies residues 36-56 (IVLWLGLALACLGLAMVLWLL). The EamA domain maps to 40-109 (LGLALACLGL…IIGGIVILGS (70 aa)). The Periplasmic segment spans residues 57–60 (VLQN). A helical transmembrane segment spans residues 61 to 81 (VPVGIAYPMLSLNFVWVTLAA). Over 82 to 87 (VKLWHE) the chain is Cytoplasmic. The chain crosses the membrane as a helical span at residues 88–108 (PVSPRHWCGVAFIIGGIVILG). At 109–111 (STV) the chain is on the periplasmic side.

The protein belongs to the ArnE family. Heterodimer of ArnE and ArnF.

Its subcellular location is the cell inner membrane. It participates in bacterial outer membrane biogenesis; lipopolysaccharide biosynthesis. Its function is as follows. Translocates 4-amino-4-deoxy-L-arabinose-phosphoundecaprenol (alpha-L-Ara4N-phosphoundecaprenol) from the cytoplasmic to the periplasmic side of the inner membrane. This is Probable 4-amino-4-deoxy-L-arabinose-phosphoundecaprenol flippase subunit ArnE from Escherichia coli O157:H7.